The sequence spans 158 residues: Crossover junction endodeoxyribonuclease RuvC (158 aa).

Catalysis depends on residues Asp-7, Glu-66, and Asp-139. Positions 7, 66, and 139 each coordinate Mg(2+).

It belongs to the RuvC family. As to quaternary structure, homodimer which binds Holliday junction (HJ) DNA. The HJ becomes 2-fold symmetrical on binding to RuvC with unstacked arms; it has a different conformation from HJ DNA in complex with RuvA. In the full resolvosome a probable DNA-RuvA(4)-RuvB(12)-RuvC(2) complex forms which resolves the HJ. Mg(2+) is required as a cofactor.

The protein localises to the cytoplasm. The catalysed reaction is Endonucleolytic cleavage at a junction such as a reciprocal single-stranded crossover between two homologous DNA duplexes (Holliday junction).. Its function is as follows. The RuvA-RuvB-RuvC complex processes Holliday junction (HJ) DNA during genetic recombination and DNA repair. Endonuclease that resolves HJ intermediates. Cleaves cruciform DNA by making single-stranded nicks across the HJ at symmetrical positions within the homologous arms, yielding a 5'-phosphate and a 3'-hydroxyl group; requires a central core of homology in the junction. The consensus cleavage sequence is 5'-(A/T)TT(C/G)-3'. Cleavage occurs on the 3'-side of the TT dinucleotide at the point of strand exchange. HJ branch migration catalyzed by RuvA-RuvB allows RuvC to scan DNA until it finds its consensus sequence, where it cleaves and resolves the cruciform DNA. The polypeptide is Crossover junction endodeoxyribonuclease RuvC (Nitratiruptor sp. (strain SB155-2)).